The chain runs to 826 residues: Ubiquitin carboxyl-terminal hydrolase 16 (826 aa).

The UBP-type zinc finger occupies 22-142 (PMCRHIRKGL…QVVDYVRKQA (121 aa)). Cysteine 24, histidine 26, cysteine 48, cysteine 51, cysteine 74, cysteine 77, cysteine 82, histidine 90, histidine 94, histidine 103, cysteine 116, and cysteine 119 together coordinate Zn(2+). Lysine 140 participates in a covalent cross-link: Glycyl lysine isopeptide (Lys-Gly) (interchain with G-Cter in SUMO2). Residues 146 to 190 (TPKPAEKDNGNIELENKKLEKESKNEQEREKKENMAKENPPMNSP) form a disordered region. Positions 149-181 (PAEKDNGNIELENKKLEKESKNEQEREKKENMA) are enriched in basic and acidic residues. Serine 189 carries the phosphoserine modification. The USP domain maps to 196–825 (KGLSNLGNTC…QAYLLFYERI (630 aa)). Cysteine 205 acts as the Nucleophile in catalysis. The segment covering 394 to 408 (SGKKSVNDKNLKKTM) has biased composition (basic and acidic residues). Residues 394–460 (SGKKSVNDKN…AKNQRRQQKI (67 aa)) form a disordered region. Acidic residues predominate over residues 409–420 (EDEDQDSEEEKD). Serine 415 carries the post-translational modification Phosphoserine. Basic and acidic residues predominate over residues 421 to 430 (NDSYIKERSD). Basic residues predominate over residues 438–458 (HLQKKAKKQAKKQAKNQRRQQ). A Phosphoserine modification is found at serine 552. Threonine 557 bears the Phosphothreonine mark. Histidine 761 acts as the Proton acceptor in catalysis.

This sequence belongs to the peptidase C19 family. USP16 subfamily. In terms of assembly, homotetramer. Associates with late pre-40S ribosomes. Interacts with CEP78; promoting deubiquitination of tektins. Phosphorylated at the onset of mitosis and dephosphorylated during the metaphase/anaphase transition. Phosphorylation by AURKB enhances the deubiquitinase activity.

The protein localises to the nucleus. The catalysed reaction is Thiol-dependent hydrolysis of ester, thioester, amide, peptide and isopeptide bonds formed by the C-terminal Gly of ubiquitin (a 76-residue protein attached to proteins as an intracellular targeting signal).. Functionally, specifically deubiquitinates 'Lys-120' of histone H2A (H2AK119Ub), a specific tag for epigenetic transcriptional repression, thereby acting as a coactivator. Deubiquitination of histone H2A is a prerequisite for subsequent phosphorylation at 'Ser-11' of histone H3 (H3S10ph), and is required for chromosome segregation when cells enter into mitosis. In resting B- and T-lymphocytes, phosphorylation by AURKB leads to enhance its activity, thereby maintaining transcription in resting lymphocytes. Regulates Hox gene expression via histone H2A deubiquitination. Prefers nucleosomal substrates. Does not deubiquitinate histone H2B. Also deubiquitinates non-histone proteins, such as ribosomal protein RPS27A: deubiquitination of monoubiquitinated RPS27A promotes maturation of the 40S ribosomal subunit. Also mediates deubiquitination of tektin proteins (TEKT1, TEKT2, TEK3, TEKT4 and TEKT5), promoting their stability. The sequence is that of Ubiquitin carboxyl-terminal hydrolase 16 from Macaca fascicularis (Crab-eating macaque).